Here is a 94-residue protein sequence, read N- to C-terminus: Trp operon repressor homolog (94 aa).

A DNA-binding region spans residues 58–81 (QREIAEKYGVSIAQITRGSNALKG).

Belongs to the TrpR family. In terms of assembly, homodimer.

The protein resides in the cytoplasm. Functionally, this protein is an aporepressor. When complexed with L-tryptophan it binds the operator region of the trp operon and prevents the initiation of transcription. In Chlamydia trachomatis serovar A (strain ATCC VR-571B / DSM 19440 / HAR-13), this protein is Trp operon repressor homolog.